We begin with the raw amino-acid sequence, 446 residues long: MSQILTASQAEELHKSMVAYLSSIKASQSSNTLREELGIGDNFDEATCKKYEGLLEKKWTGIARLQRKILDLESKITSLQAELDSVPSMARSKQHQDPDNWLPAQSSAHTFESHRDAITSIAFHPVFTSLASGSEDCTIKIWDWELGELERTLKGHMRGVSGLDFGGQKGHTLLASCSGDLTIKLWDPSKDYANIRTLHGHDHSVSAVRFLTSTENLLVSASRDASIRIWDVSTGYCVRTITSNSIWFLDVSPSFDGKWLVAGGRDQAVTVWEVSSAEPRAALLGHDNDVQCCVFAPPASYEYLATLAGHKKAPLASSSSEFIATGSRDKTIKLWEARGRLIKTLVGHDNWIRGLVFHPSGKYLFSVSDDKTIRCWDLSQEGRLVKTISNAHGHFISCIRWAPPPRNAAAEASETTNGVSKKAPTKPAFQCVIATGSADSCVRVFK.

A LisH domain is found at 9-41 (QAEELHKSMVAYLSSIKASQSSNTLREELGIGD). Residues 60–86 (TGIARLQRKILDLESKITSLQAELDSV) adopt a coiled-coil conformation. WD repeat units lie at residues 113–154 (SHRD…RTLK), 156–196 (HMRG…ANIR), 200–240 (GHDH…CVRT), 243–282 (SNSI…PRAA), 285–345 (GHDN…IKTL), 347–386 (GHDN…RLVK), 391–430 (AHGH…PAFQ), and 432–446 (VIAT…RVFK).

The protein belongs to the WD repeat LIS1/nudF family. Self-associates. Interacts with nudE and dynein.

The protein resides in the cytoplasm. The protein localises to the cytoskeleton. It localises to the spindle pole. Functionally, positively regulates the activity of the minus-end directed microtubule motor protein dynein. May enhance dynein-mediated microtubule sliding by targeting dynein to the microtubule plus end. Required for nuclear migration during vegetative growth as well as development. Required for retrograde early endosome (EE) transport from the hyphal tip. Required for localization of dynein to the mitotic spindle poles. Recruits additional proteins to the dynein complex at SPBs. This chain is Nuclear distribution protein nudF, found in Aspergillus terreus (strain NIH 2624 / FGSC A1156).